We begin with the raw amino-acid sequence, 155 residues long: Small ribosomal subunit protein uS7cz/uS7cy (155 aa).

The protein belongs to the universal ribosomal protein uS7 family. In terms of assembly, part of the 30S ribosomal subunit.

It is found in the plastid. The protein resides in the chloroplast. One of the primary rRNA binding proteins, it binds directly to 16S rRNA where it nucleates assembly of the head domain of the 30S subunit. This chain is Small ribosomal subunit protein uS7cz/uS7cy (rps7-A), found in Anthoceros angustus (Hornwort).